A 163-amino-acid polypeptide reads, in one-letter code: 6,7-dimethyl-8-ribityllumazine synthase 1 (163 aa).

5-amino-6-(D-ribitylamino)uracil is bound by residues phenylalanine 27, 58–60 (ALE), and 87–89 (CVV). 92–93 (ET) serves as a coordination point for (2S)-2-hydroxy-3-oxobutyl phosphate. Catalysis depends on histidine 95, which acts as the Proton donor. Asparagine 120 provides a ligand contact to 5-amino-6-(D-ribitylamino)uracil. Arginine 134 provides a ligand contact to (2S)-2-hydroxy-3-oxobutyl phosphate.

This sequence belongs to the DMRL synthase family.

It carries out the reaction (2S)-2-hydroxy-3-oxobutyl phosphate + 5-amino-6-(D-ribitylamino)uracil = 6,7-dimethyl-8-(1-D-ribityl)lumazine + phosphate + 2 H2O + H(+). The protein operates within cofactor biosynthesis; riboflavin biosynthesis; riboflavin from 2-hydroxy-3-oxobutyl phosphate and 5-amino-6-(D-ribitylamino)uracil: step 1/2. Catalyzes the formation of 6,7-dimethyl-8-ribityllumazine by condensation of 5-amino-6-(D-ribitylamino)uracil with 3,4-dihydroxy-2-butanone 4-phosphate. This is the penultimate step in the biosynthesis of riboflavin. This Rhodopseudomonas palustris (strain ATCC BAA-98 / CGA009) protein is 6,7-dimethyl-8-ribityllumazine synthase 1.